The primary structure comprises 157 residues: Endoribonuclease YbeY (157 aa).

The Zn(2+) site is built by His-111, His-115, and His-121.

This sequence belongs to the endoribonuclease YbeY family. The cofactor is Zn(2+).

It localises to the cytoplasm. Functionally, single strand-specific metallo-endoribonuclease involved in late-stage 70S ribosome quality control and in maturation of the 3' terminus of the 16S rRNA. The protein is Endoribonuclease YbeY of Pseudomonas putida (strain W619).